We begin with the raw amino-acid sequence, 618 residues long: Neurosecretory protein VGF (618 aa).

A signal peptide spans 1 to 23 (MKSLRLPATVLFCLLLLIKGLGA). Disordered stretches follow at residues 23–46 (AAPP…PVAG), 86–201 (VLLQ…LESP), and 219–262 (PERA…GEAL). The span at 26–37 (PGHPEAQPPPPS) shows a compositional bias: pro residues. The segment covering 180–195 (ETAAAETETRTHTLTR) has biased composition (low complexity). Residues 301 to 332 (LAQVEAGRRQAEATRQAAAQEERLADLASDLL) adopt a coiled-coil conformation. Pyrrolidone carboxylic acid is present on Gln310. The segment at 342 to 603 (RQRGLGGRGL…EAEERRLQEQ (262 aa)) is disordered. The span at 356-378 (GGGRETARQQEEAEQERRGGEER) shows a compositional bias: basic and acidic residues. Residues 379–395 (VGEEDEEAAEAEAEAEE) are compositionally biased toward acidic residues. The segment covering 416–434 (AEDKRSREETPGHRRKEAE) has biased composition (basic and acidic residues). Position 421 is a phosphoserine (Ser421). Thr425 carries the phosphothreonine modification. Over residues 435–451 (GAEEGGAEDEDDDEEMD) the composition is skewed to acidic residues. Residues 490–500 (PPEPVPPPRAA) are compositionally biased toward pro residues. Residues 578 to 602 (HYPDREAQARRAQEEAEAEERRLQE) show a composition bias toward basic and acidic residues.

In terms of processing, multiple peptides are derived from VGF, with activities in synaptic plasticity, antidepression, penile erection, autonomic activation, and increases in energy expenditure.

The protein resides in the secreted. It is found in the cytoplasmic vesicle. It localises to the secretory vesicle. Functionally, secreted polyprotein that is packaged and proteolytically processed by prohormone convertases PCSK1 and PCSK2 in a cell-type-specific manner. VGF and peptides derived from its processing play many roles in neurogenesis and neuroplasticity associated with learning, memory, depression and chronic pain. Its function is as follows. Plays a role in the control of body fluid homeostasis by regulating vasopressin release. Suppresses presynaptic glutamatergic neurons connected to vasopressin neurons. Plays a role in the control of body fluid homeostasis by regulating vasopressin release. Activates GABAergic interneurons which are inhibitory neurons of the nervous system and thereby suppresses presynaptic glutamatergic neurons. Also stimulates feeding behavior in an orexin-dependent manner in the hypothalamus. Functions as a positive regulator for the activation of orexin neurons resulting in elevated gastric acid secretion and gastric emptying. The sequence is that of Neurosecretory protein VGF from Bos taurus (Bovine).